Here is a 250-residue protein sequence, read N- to C-terminus: uncharacterized protein (250 aa).

This is an uncharacterized protein from Bacillus subtilis (strain 168).